The sequence spans 88 residues: Small ribosomal subunit protein uS15 (88 aa).

It belongs to the universal ribosomal protein uS15 family. Part of the 30S ribosomal subunit. Forms a bridge to the 50S subunit in the 70S ribosome, contacting the 23S rRNA.

Its function is as follows. One of the primary rRNA binding proteins, it binds directly to 16S rRNA where it helps nucleate assembly of the platform of the 30S subunit by binding and bridging several RNA helices of the 16S rRNA. In terms of biological role, forms an intersubunit bridge (bridge B4) with the 23S rRNA of the 50S subunit in the ribosome. The chain is Small ribosomal subunit protein uS15 from Leptospira borgpetersenii serovar Hardjo-bovis (strain JB197).